Reading from the N-terminus, the 507-residue chain is L-amino-acid oxidase (507 aa).

The signal sequence occupies residues 1–19 (MNVLFIFSLLFLAALESCA). Residues Cys29 and Cys192 are joined by a disulfide bond. FAD contacts are provided by residues 62–63 (MA), 82–83 (EA), Arg90, and 106–109 (GPMR). Arg109 provides a ligand contact to substrate. N-linked (GlcNAc...) asparagine glycans are attached at residues Asn191 and Asn213. Position 280 (Val280) interacts with FAD. Cys348 and Cys429 are joined by a disulfide. Asn378 is a glycosylation site (N-linked (GlcNAc...) asparagine). Tyr389 provides a ligand contact to substrate. FAD contacts are provided by residues Glu473 and 480 to 485 (GWIDST).

This sequence belongs to the flavin monoamine oxidase family. FIG1 subfamily. Homodimer; non-covalently linked. It depends on FAD as a cofactor. As to expression, expressed by the venom gland.

It localises to the secreted. The enzyme catalyses an L-alpha-amino acid + O2 + H2O = a 2-oxocarboxylate + H2O2 + NH4(+). It catalyses the reaction L-leucine + O2 + H2O = 4-methyl-2-oxopentanoate + H2O2 + NH4(+). Functionally, catalyzes an oxidative deamination of predominantly hydrophobic and aromatic L-amino acids, thus producing hydrogen peroxide that may contribute to the diverse toxic effects of this enzyme. Shows activity on L-Leu. Exhibits diverse biological activities, such as hemorrhage, hemolysis, edema, apoptosis of vascular endothelial cells or tumor cell lines, antibacterial and antiparasitic activities. This protein induces platelet aggregation by both hydrogen peroxide production and binding to platelet membrane proteins (that would enhance the sensitivity of platelets to hydrogen peroxide). Effects of snake L-amino oxidases on platelets are controversial, since they either induce aggregation or inhibit agonist-induced aggregation. These different effects are probably due to different experimental conditions. This is L-amino-acid oxidase from Naja atra (Chinese cobra).